We begin with the raw amino-acid sequence, 376 residues long: 23S rRNA (uracil(747)-C(5))-methyltransferase RlmC (376 aa).

Residues cysteine 3, cysteine 11, cysteine 14, and cysteine 88 each contribute to the [4Fe-4S] cluster site. The S-adenosyl-L-methionine site is built by glutamine 213, phenylalanine 242, glutamate 263, and asparagine 308. Catalysis depends on cysteine 335, which acts as the Nucleophile.

Belongs to the class I-like SAM-binding methyltransferase superfamily. RNA M5U methyltransferase family. RlmC subfamily.

The enzyme catalyses uridine(747) in 23S rRNA + S-adenosyl-L-methionine = 5-methyluridine(747) in 23S rRNA + S-adenosyl-L-homocysteine + H(+). Catalyzes the formation of 5-methyl-uridine at position 747 (m5U747) in 23S rRNA. The protein is 23S rRNA (uracil(747)-C(5))-methyltransferase RlmC of Vibrio vulnificus (strain YJ016).